Here is a 1112-residue protein sequence, read N- to C-terminus: Carbamoyl phosphate synthase large chain (1112 aa).

The tract at residues 1–407 (MPRRTDLRHV…ALGKVMRSLE (407 aa)) is carboxyphosphate synthetic domain. The ATP site is built by Arg-134, Arg-174, Gly-180, Gly-181, Glu-213, Ile-215, Glu-220, Gly-246, Val-247, His-248, Gln-290, and Glu-304. The region spanning 138 to 333 (KDIVTKVGGE…IAKIAAKLAI (196 aa)) is the ATP-grasp 1 domain. The Mg(2+) site is built by Gln-290, Glu-304, and Asn-306. Gln-290, Glu-304, and Asn-306 together coordinate Mn(2+). The tract at residues 408 to 559 (TGRAGFWTAP…ELDPAAESEV (152 aa)) is oligomerization domain. The tract at residues 560–965 (APQAERPKVL…AFAKSQTAAY (406 aa)) is carbamoyl phosphate synthetic domain. Residues 693–884 (GEVLRTAGLP…LAKACARIML (192 aa)) enclose the ATP-grasp 2 domain. ATP is bound by residues Arg-729, Arg-768, Leu-770, Glu-775, Gly-800, Ile-801, His-802, Ser-803, Gln-843, and Glu-855. Mg(2+) contacts are provided by Gln-843, Glu-855, and Asn-857. Mn(2+)-binding residues include Gln-843, Glu-855, and Asn-857. Residues 966 to 1112 (GSLPSEGTVF…LQELHSELGN (147 aa)) enclose the MGS-like domain. The interval 966 to 1112 (GSLPSEGTVF…LQELHSELGN (147 aa)) is allosteric domain.

The protein belongs to the CarB family. As to quaternary structure, composed of two chains; the small (or glutamine) chain promotes the hydrolysis of glutamine to ammonia, which is used by the large (or ammonia) chain to synthesize carbamoyl phosphate. Tetramer of heterodimers (alpha,beta)4. The cofactor is Mg(2+). It depends on Mn(2+) as a cofactor.

The catalysed reaction is hydrogencarbonate + L-glutamine + 2 ATP + H2O = carbamoyl phosphate + L-glutamate + 2 ADP + phosphate + 2 H(+). The enzyme catalyses hydrogencarbonate + NH4(+) + 2 ATP = carbamoyl phosphate + 2 ADP + phosphate + 2 H(+). It functions in the pathway amino-acid biosynthesis; L-arginine biosynthesis; carbamoyl phosphate from bicarbonate: step 1/1. It participates in pyrimidine metabolism; UMP biosynthesis via de novo pathway; (S)-dihydroorotate from bicarbonate: step 1/3. Large subunit of the glutamine-dependent carbamoyl phosphate synthetase (CPSase). CPSase catalyzes the formation of carbamoyl phosphate from the ammonia moiety of glutamine, carbonate, and phosphate donated by ATP, constituting the first step of 2 biosynthetic pathways, one leading to arginine and/or urea and the other to pyrimidine nucleotides. The large subunit (synthetase) binds the substrates ammonia (free or transferred from glutamine from the small subunit), hydrogencarbonate and ATP and carries out an ATP-coupled ligase reaction, activating hydrogencarbonate by forming carboxy phosphate which reacts with ammonia to form carbamoyl phosphate. The chain is Carbamoyl phosphate synthase large chain from Mycobacterium sp. (strain JLS).